The chain runs to 64 residues: Prokaryotic ubiquitin-like protein UBact (64 aa).

Basic and acidic residues-rich tracts occupy residues 1–12 (MSDLFRMEERRQ) and 33–64 (PDVK…RSGE). A disordered region spans residues 1-64 (MSDLFRMEER…ARRYRQRSGE (64 aa)). Glu64 participates in a covalent cross-link: Isoglutamyl lysine isopeptide (Glu-Lys) (interchain with K-? in acceptor proteins).

Belongs to the ubiquitin-like protein UBact family.

May function as a protein modifier covalently attached to lysine residues of substrate proteins. This may serve to target the modified proteins for degradation by proteasomes. This chain is Prokaryotic ubiquitin-like protein UBact, found in Chthonomonas calidirosea (strain DSM 23976 / ICMP 18418 / T49).